The following is a 206-amino-acid chain: Small ribosomal subunit protein uS4 (206 aa).

Residues 96–156 (CRLDNVVYRM…EKAKNQLRIV (61 aa)) enclose the S4 RNA-binding domain.

This sequence belongs to the universal ribosomal protein uS4 family. Part of the 30S ribosomal subunit. Contacts protein S5. The interaction surface between S4 and S5 is involved in control of translational fidelity.

In terms of biological role, one of the primary rRNA binding proteins, it binds directly to 16S rRNA where it nucleates assembly of the body of the 30S subunit. Its function is as follows. With S5 and S12 plays an important role in translational accuracy. The chain is Small ribosomal subunit protein uS4 from Pseudomonas savastanoi pv. phaseolicola (strain 1448A / Race 6) (Pseudomonas syringae pv. phaseolicola (strain 1448A / Race 6)).